A 289-amino-acid chain; its full sequence is Tumor necrosis factor receptor superfamily member 5 (289 aa).

The N-terminal stretch at 1–19 (MVSLPRLCALWGCLLTAVH) is a signal peptide. Over 20-193 (LGQCVTCSDK…VICGLKSRMR (174 aa)) the chain is Extracellular. TNFR-Cys repeat units lie at residues 25–60 (TCSD…TQCH), 61–103 (PCDS…DTVC), 104–144 (TCKE…TVCH), and 145–187 (PCPV…VICG). 8 disulfide bridges follow: C26–C37, C38–C51, C41–C59, C62–C77, C83–C103, C105–C119, C111–C116, and C125–C143. N153 is a glycosylation site (N-linked (GlcNAc...) asparagine). A helical membrane pass occupies residues 194 to 215 (ALLVIPVVMGILITIFGVFLYI). Residues 216–289 (KKVVKKPKDN…TDSIALRPLV (74 aa)) lie on the Cytoplasmic side of the membrane. A disordered region spans residues 228-251 (LPPAARRQDPQEMEDYPGHNTAAP).

In terms of assembly, monomer and homodimer. Interacts with TRAF1, TRAF2 and TRAF6. Interacts with TRAF3 and TRAF5. Interacts with TRAF6 and MAP3K8; the interaction is required for ERK activation.

It is found in the cell membrane. Its subcellular location is the secreted. Receptor for TNFSF5/CD40LG. Transduces TRAF6- and MAP3K8-mediated signals that activate ERK in macrophages and B cells, leading to induction of immunoglobulin secretion. The protein is Tumor necrosis factor receptor superfamily member 5 (Cd40) of Mus musculus (Mouse).